The sequence spans 295 residues: Protoheme IX farnesyltransferase 2 (295 aa).

9 helical membrane-spanning segments follow: residues 9 to 29, 36 to 56, 83 to 103, 108 to 128, 135 to 155, 163 to 183, 209 to 229, 230 to 250, and 264 to 284; these read ITKP…FFLA, FALF…GCVF, LPLA…LLYV, LSAF…SLWL, GTLV…CAVS, VTLL…IAIF, IVLY…GGYA, GLGY…MAWG, and VFGF…VDSQ.

The protein belongs to the UbiA prenyltransferase family. Protoheme IX farnesyltransferase subfamily.

The protein localises to the cell inner membrane. The catalysed reaction is heme b + (2E,6E)-farnesyl diphosphate + H2O = Fe(II)-heme o + diphosphate. Its pathway is porphyrin-containing compound metabolism; heme O biosynthesis; heme O from protoheme: step 1/1. Functionally, converts heme B (protoheme IX) to heme O by substitution of the vinyl group on carbon 2 of heme B porphyrin ring with a hydroxyethyl farnesyl side group. This Pseudomonas putida (strain ATCC 47054 / DSM 6125 / CFBP 8728 / NCIMB 11950 / KT2440) protein is Protoheme IX farnesyltransferase 2.